A 516-amino-acid polypeptide reads, in one-letter code: MNVFFMFSLLFLAALGSCADDRNPLAECFQENDYEEFLEIARNGLKATSNPKHVVIVGAGMAGLSAAYVLAGAGHQVTVLEASERPGGRVRTYRNEEAGWYANLGPMRLPEKHRIVREYIRKFDLRLNEFSQENDNAWYFIKNIRKKVGEVKKDPGLLKYPVKPSEAGKSAGQLYEESLGKVVEELKRTNCSYILNKYDTYSTKEYLIKEGDLSPGAVDMIGDLLNEDSGYYVSFIESLKHDDIFAYEKRFDEIVDGMDKLPTAMYRDIQDKVHFNAQVIKIQQNDQKVTVVYETLSKETPSVTADYVIVCTTSRAVRLIKFNPPLLPKKAHALRSVHYRSGTKIFLTCTTKFWEDDGIHGGKSTTDLPSRFIYYPNHNFTNGVGVIIAYGIGDDANFFQALDFKDCADIVFNDLSLIHQLPKKDIQSFCYPSVIQKWSLDKYAMGGITTFTPYQFQHFSDPLTASQGRIYFAGEYTAQAHGWIDSTIKSGLRAARDVNLASENPSGIHLSNDNEL.

The first 18 residues, 1 to 18 (MNVFFMFSLLFLAALGSC), serve as a signal peptide directing secretion. A disulfide bridge connects residues cysteine 28 and cysteine 191. Residues 61 to 62 (MA), 81 to 82 (EA), arginine 89, and 105 to 108 (GPMR) contribute to the FAD site. Residue arginine 108 coordinates substrate. An N-linked (GlcNAc...) (complex) asparagine glycan is attached at asparagine 190. A substrate-binding site is contributed by histidine 241. Valine 279 is a binding site for FAD. A disulfide bridge links cysteine 349 with cysteine 430. Asparagine 379 carries N-linked (GlcNAc...) (complex) asparagine glycosylation. Tyrosine 390 contributes to the substrate binding site. Residues glutamate 475 and 482-487 (GWIDST) contribute to the FAD site. 482-483 (GW) lines the substrate pocket.

Homodimer; non-covalently linked. It depends on FAD as a cofactor. Post-translationally, N-glycosylated at Asn-190 and Asn-379 with bis-sialylated, biantennary, core-fucosylated dodecasaccharide (composed of N-acetylglucosamine, fucose, mannose, galactose, and sialic acid residues). Expressed by the venom gland.

The protein localises to the secreted. It carries out the reaction an L-alpha-amino acid + O2 + H2O = a 2-oxocarboxylate + H2O2 + NH4(+). The enzyme catalyses L-leucine + O2 + H2O = 4-methyl-2-oxopentanoate + H2O2 + NH4(+). The catalysed reaction is L-phenylalanine + O2 + H2O = 3-phenylpyruvate + H2O2 + NH4(+). It catalyses the reaction L-tryptophan + O2 + H2O = indole-3-pyruvate + H2O2 + NH4(+). It carries out the reaction L-methionine + O2 + H2O = 4-methylsulfanyl-2-oxobutanoate + H2O2 + NH4(+). The enzyme catalyses L-isoleucine + O2 + H2O = (S)-3-methyl-2-oxopentanoate + H2O2 + NH4(+). The catalysed reaction is L-arginine + O2 + H2O = 5-guanidino-2-oxopentanoate + H2O2 + NH4(+). It catalyses the reaction L-aspartate + O2 + H2O = oxaloacetate + H2O2 + NH4(+). It carries out the reaction L-histidine + O2 + H2O = 3-(imidazol-5-yl)pyruvate + H2O2 + NH4(+). The enzyme catalyses L-2-aminohexanoate + O2 + H2O = 2-oxohexanoate + H2O2 + NH4(+). The catalysed reaction is L-2-aminopentanoate + O2 + H2O = 2-oxopentanoate + H2O2 + NH4(+). Catalyzes an oxidative deamination of predominantly hydrophobic and aromatic L-amino acids, thus producing hydrogen peroxide that may contribute to the diverse toxic effects of this enzyme. Shows high affinity for L-Phe, L-Trp, L-Met, L-Leu, and L-Ile, moderate affinity for L-Arg, L-Asp, and L-His, and very low affinity for L-Gln, L-Lys, and L-Ala. Also shows high activity on L-norleucine (L-2-aminohexanoate), and L-norvaline (L-2-aminopentanoate) and a weak activity on L-ornithine and L-aminobutyric acid. Also exhibits diverse biological activities, such as hemorrhage, hemolysis, edema, apoptosis of vascular endothelial cells or tumor cell lines, and antiparasitic activities, as well as regulation of platelet aggregation. Its effect on platelets is controversial, since it either induces aggregation or inhibits agonist-induced aggregation. These different effects are probably due to different experimental conditions. A possible explanation of high efficacy it that LAAO may bind to target cells through its sialylated glycan moiety that would bind to sialic acid-binding lectins (siglec) on target cells. This interaction may result in production of locally high concentrations of hydrogen peroxide in or near the binding interface, leading, in turn to oxidative damage of the siglec or another adjacent cell structural elements. In Calloselasma rhodostoma (Malayan pit viper), this protein is L-amino-acid oxidase.